The primary structure comprises 215 residues: MOB kinase activator-like 1A (215 aa).

Positions 1 to 27 (MSLFGLGRNQKTFRPKKSAPSGSKGAQ) are disordered. C79, C84, H161, and H166 together coordinate Zn(2+).

Belongs to the MOB1/phocein family. In terms of assembly, interacts with SIK1 at the plasma membrane and in the nucleus. As to expression, constitutively expressed. In 3- to 4-day-old seedlings, expression is high in the shoot apical meristem and along the vasculature in cotyledons, hypocotyls and roots. At the root tip, expression is detected in columella and lateral root cap cells as well as in the stem cell niche around the quiescent center (QC). The levels of expression decrease progressively in the meristematic zone from the root tip towards the base of the root, becoming stronger again in the elongation zone. In flowers, expression appears localized in ovules and pollen.

It is found in the nucleus. The protein resides in the cell membrane. Its subcellular location is the vacuole membrane. Plays a key role in regulation of cell expansion and cell division. Required for proper plant development, the correct patterning of the root meristem and the control of root growth. Involved in both sporogenesis and gametogenesis. This Arabidopsis thaliana (Mouse-ear cress) protein is MOB kinase activator-like 1A.